The primary structure comprises 334 residues: Ornithine carbamoyltransferase (334 aa).

Residues 57–60, Q84, R108, and 135–138 contribute to the carbamoyl phosphate site; these read STRT and HPTQ. L-ornithine-binding positions include N169, D233, and 237–238; that span reads SM. Carbamoyl phosphate contacts are provided by residues 275-276 and R320; that span reads CL.

Belongs to the aspartate/ornithine carbamoyltransferase superfamily. OTCase family.

The protein localises to the cytoplasm. It carries out the reaction carbamoyl phosphate + L-ornithine = L-citrulline + phosphate + H(+). The protein operates within amino-acid biosynthesis; L-arginine biosynthesis; L-arginine from L-ornithine and carbamoyl phosphate: step 1/3. In terms of biological role, reversibly catalyzes the transfer of the carbamoyl group from carbamoyl phosphate (CP) to the N(epsilon) atom of ornithine (ORN) to produce L-citrulline. The chain is Ornithine carbamoyltransferase (argF) from Pasteurella multocida (strain Pm70).